A 145-amino-acid polypeptide reads, in one-letter code: Cuticle protein 5 (145 aa).

This is Cuticle protein 5 from Blaberus craniifer (Death's head cockroach).